A 316-amino-acid polypeptide reads, in one-letter code: RNA interference defective protein 11 (316 aa).

Residues 183-218 form an RING-type; degenerate zinc finger; it reads CYINFNCQTSKVMFGCGHVYCEQCLNSWNDKPCSVC.

As to quaternary structure, interacts (via RING-type zinc finger domain) with rde-10.

Functionally, in complex with rde-10, required in the endogenous and exogenous siRNA pathway for biogenesis and accumulation of secondary small interfering RNA (siRNA) intermediates, such as 22G-siRNAs derived from ergo-1 targets. The polypeptide is RNA interference defective protein 11 (Caenorhabditis elegans).